Here is a 93-residue protein sequence, read N- to C-terminus: UPF0298 protein LMHCC_0506 (93 aa).

Belongs to the UPF0298 family.

The protein localises to the cytoplasm. The protein is UPF0298 protein LMHCC_0506 of Listeria monocytogenes serotype 4a (strain HCC23).